Consider the following 115-residue polypeptide: Phosphoribosyl-AMP cyclohydrolase (115 aa).

Aspartate 80 provides a ligand contact to Mg(2+). Cysteine 81 serves as a coordination point for Zn(2+). Residues aspartate 82 and aspartate 84 each contribute to the Mg(2+) site. Zn(2+) is bound by residues cysteine 97 and cysteine 104.

The protein belongs to the PRA-CH family. As to quaternary structure, homodimer. Mg(2+) serves as cofactor. Requires Zn(2+) as cofactor.

It localises to the cytoplasm. It catalyses the reaction 1-(5-phospho-beta-D-ribosyl)-5'-AMP + H2O = 1-(5-phospho-beta-D-ribosyl)-5-[(5-phospho-beta-D-ribosylamino)methylideneamino]imidazole-4-carboxamide. Its pathway is amino-acid biosynthesis; L-histidine biosynthesis; L-histidine from 5-phospho-alpha-D-ribose 1-diphosphate: step 3/9. In terms of biological role, catalyzes the hydrolysis of the adenine ring of phosphoribosyl-AMP. This Nocardia farcinica (strain IFM 10152) protein is Phosphoribosyl-AMP cyclohydrolase.